Reading from the N-terminus, the 276-residue chain is Light-independent protochlorophyllide reductase iron-sulfur ATP-binding protein (276 aa).

Residues 12–17 and Lys41 contribute to the ATP site; that span reads GIGKST. Residue Ser16 coordinates Mg(2+). [4Fe-4S] cluster is bound by residues Cys97 and Cys131. An ATP-binding site is contributed by 182-183; it reads NR.

The protein belongs to the NifH/BchL/ChlL family. In terms of assembly, homodimer. Protochlorophyllide reductase is composed of three subunits; BchL, BchN and BchB. The cofactor is [4Fe-4S] cluster.

The enzyme catalyses chlorophyllide a + oxidized 2[4Fe-4S]-[ferredoxin] + 2 ADP + 2 phosphate = protochlorophyllide a + reduced 2[4Fe-4S]-[ferredoxin] + 2 ATP + 2 H2O. It participates in porphyrin-containing compound metabolism; bacteriochlorophyll biosynthesis (light-independent). Its function is as follows. Component of the dark-operative protochlorophyllide reductase (DPOR) that uses Mg-ATP and reduced ferredoxin to reduce ring D of protochlorophyllide (Pchlide) to form chlorophyllide a (Chlide). This reaction is light-independent. The L component serves as a unique electron donor to the NB-component of the complex, and binds Mg-ATP. The sequence is that of Light-independent protochlorophyllide reductase iron-sulfur ATP-binding protein from Chlorobaculum tepidum (strain ATCC 49652 / DSM 12025 / NBRC 103806 / TLS) (Chlorobium tepidum).